Reading from the N-terminus, the 756-residue chain is Inhibitor of nuclear factor kappa-B kinase subunit beta (756 aa).

Positions 15-300 (WEMKERLGTG…DPVYGPNGCF (286 aa)) constitute a Protein kinase domain. ATP is bound by residues 21 to 29 (LGTGGFGNV) and Lys-44. The active-site Proton acceptor is Asp-145. A Glycyl lysine isopeptide (Lys-Gly) (interchain with G-Cter in ubiquitin) cross-link involves residue Lys-163. A Phosphoserine; by TBK1 and PKC/PRKCZ modification is found at Ser-177. Position 179 is an S-nitrosocysteine (Cys-179). The residue at position 181 (Ser-181) is a Phosphoserine; by TBK1, PKC/PRKCZ and PDPK1. Position 191 is a hydroxyproline (Pro-191). The tract at residues 458-479 (LLRNNSCLSKMKNSMASMSQQL) is leucine-zipper. Phosphoserine; by autocatalysis occurs at positions 670, 672, 675, 682, 689, 697, 705, 733, and 740. Positions 737–742 (LDWSWL) are NEMO-binding.

Belongs to the protein kinase superfamily. Ser/Thr protein kinase family. I-kappa-B kinase subfamily. In terms of assembly, component of the I-kappa-B-kinase (IKK) core complex consisting of CHUK, IKBKB and IKBKG; probably four alpha/CHUK-beta/IKBKB dimers are associated with four gamma/IKBKG subunits. The IKK core complex seems to associate with regulatory or adapter proteins to form a IKK-signalosome holo-complex. The IKK complex associates with TERF2IP/RAP1, leading to promote IKK-mediated phosphorylation of RELA/p65. Part of a complex composed of NCOA2, NCOA3, CHUK/IKKA, IKBKB, IKBKG and CREBBP. Part of a 70-90 kDa complex at least consisting of CHUK/IKKA, IKBKB, NFKBIA, RELA, ELP1 and MAP3K14. Found in a membrane raft complex, at least composed of BCL10, CARD11, DPP4 and IKBKB. Interacts with SQSTM1 through PRKCZ or PRKCI. Forms an NGF-induced complex with IKBKB, PRKCI and TRAF6. May interact with MAVS/IPS1. Interacts with NALP2. Interacts with TICAM1. Interacts with FAF1; the interaction disrupts the IKK complex formation. Interacts with ATM. Part of a ternary complex consisting of TANK, IKBKB and IKBKG. Interacts with NIBP; the interaction is direct. Interacts with ARRB1 and ARRB2. Interacts with TRIM21. Interacts with NLRC5; prevents IKBKB phosphorylation and kinase activity. Interacts with PDPK1. Interacts with EIF2AK2/PKR. The phosphorylated form interacts with PPM1A and PPM1B. Interacts with ZNF268; the interaction is further increased in a TNF-alpha-dependent manner. Interacts with IKBKE. Interacts with ZC3H12A. Interacts with AKAP13. Interacts with IFIT5; the interaction synergizes the recruitment of IKK to MAP3K7 and enhances IKK phosphorylation. Interacts with LRRC14; disrupts IKBKB-IKBKG interaction preventing I-kappa-B-kinase (IKK) core complex formation and leading to a decrease of IKBKB phosphorylation and NF-kappaB activation. Interacts with SASH1. Interacts with ARFIP2. Interacts with FKBP5. Upon cytokine stimulation, phosphorylated on Ser-177 and Ser-181 by MEKK1 and/or MAP3K14/NIK as well as TBK1 and PRKCZ; which enhances activity. Phosphorylated by MAP3K7/TAK1 in response to NOD1 and NOD2 signaling, promoting activation and phosphorylation of NF-kappa-B inhibitors, leading to NF-kappa-B activation. Once activated, autophosphorylates on the C-terminal serine cluster; which decreases activity and prevents prolonged activation of the inflammatory response. Phosphorylated by the IKK-related kinases TBK1 and IKBKE, which is associated with reduced CHUK/IKKA and IKBKB activity and NF-kappa-B-dependent gene transcription. Dephosphorylated at Ser-177 and Ser-181 by PPM1A and PPM1B. Post-translationally, ubiquitinated. Monoubiquitination involves TRIM21 that leads to inhibition of Tax-induced NF-kappa-B signaling. 'Ser-163' may not serve as a monoubiquitination site. Ubiquitination on 'Ser-163' may modulate phosphorylation on C-terminal serine residues. In terms of processing, hydroxylated by PHD1/EGLN2, loss of hydroxylation under hypoxic conditions results in activation of NF-kappa-B.

Its subcellular location is the cytoplasm. The protein resides in the nucleus. The protein localises to the membrane raft. The catalysed reaction is L-seryl-[I-kappa-B protein] + ATP = O-phospho-L-seryl-[I-kappa-B protein] + ADP + H(+). It catalyses the reaction L-seryl-[protein] + ATP = O-phospho-L-seryl-[protein] + ADP + H(+). The enzyme catalyses L-threonyl-[protein] + ATP = O-phospho-L-threonyl-[protein] + ADP + H(+). Functionally, serine kinase that plays an essential role in the NF-kappa-B signaling pathway which is activated by multiple stimuli such as inflammatory cytokines, bacterial or viral products, DNA damages or other cellular stresses. Acts as a part of the canonical IKK complex in the conventional pathway of NF-kappa-B activation. Phosphorylates inhibitors of NF-kappa-B on 2 critical serine residues. These modifications allow polyubiquitination of the inhibitors and subsequent degradation by the proteasome. In turn, free NF-kappa-B is translocated into the nucleus and activates the transcription of hundreds of genes involved in immune response, growth control, or protection against apoptosis. In addition to the NF-kappa-B inhibitors, phosphorylates several other components of the signaling pathway including NEMO/IKBKG, NF-kappa-B subunits RELA and NFKB1, as well as IKK-related kinases TBK1 and IKBKE. IKK-related kinase phosphorylations may prevent the overproduction of inflammatory mediators since they exert a negative regulation on canonical IKKs. Phosphorylates FOXO3, mediating the TNF-dependent inactivation of this pro-apoptotic transcription factor. Also phosphorylates other substrates including NAA10, NCOA3, BCL10 and IRS1. Phosphorylates RIPK1 at 'Ser-25' which represses its kinase activity and consequently prevents TNF-mediated RIPK1-dependent cell death. Phosphorylates the C-terminus of IRF5, stimulating IRF5 homodimerization and translocation into the nucleus. This Bos taurus (Bovine) protein is Inhibitor of nuclear factor kappa-B kinase subunit beta (IKBKB).